A 280-amino-acid chain; its full sequence is 2,3,4,5-tetrahydropyridine-2,6-dicarboxylate N-succinyltransferase (280 aa).

The substrate site is built by arginine 107 and aspartate 144.

It belongs to the transferase hexapeptide repeat family. As to quaternary structure, homotrimer.

The protein resides in the cytoplasm. The catalysed reaction is (S)-2,3,4,5-tetrahydrodipicolinate + succinyl-CoA + H2O = (S)-2-succinylamino-6-oxoheptanedioate + CoA. It functions in the pathway amino-acid biosynthesis; L-lysine biosynthesis via DAP pathway; LL-2,6-diaminopimelate from (S)-tetrahydrodipicolinate (succinylase route): step 1/3. The protein is 2,3,4,5-tetrahydropyridine-2,6-dicarboxylate N-succinyltransferase of Granulibacter bethesdensis (strain ATCC BAA-1260 / CGDNIH1).